The following is a 486-amino-acid chain: NADH-quinone oxidoreductase subunit N (486 aa).

A run of 14 helical transmembrane segments spans residues Ser14–Ile34, Met45–Val65, Phe77–Leu97, Cys105–Val125, Leu130–Leu150, Tyr163–Leu183, Ile203–Ile223, Ser237–Met257, Ile268–Ile288, Met299–Thr319, Leu326–Phe346, Phe377–Gly397, Gly409–Leu429, and Phe459–Thr479.

This sequence belongs to the complex I subunit 2 family. As to quaternary structure, NDH-1 is composed of 14 different subunits. Subunits NuoA, H, J, K, L, M, N constitute the membrane sector of the complex.

Its subcellular location is the cell inner membrane. The catalysed reaction is a quinone + NADH + 5 H(+)(in) = a quinol + NAD(+) + 4 H(+)(out). Its function is as follows. NDH-1 shuttles electrons from NADH, via FMN and iron-sulfur (Fe-S) centers, to quinones in the respiratory chain. The immediate electron acceptor for the enzyme in this species is believed to be ubiquinone. Couples the redox reaction to proton translocation (for every two electrons transferred, four hydrogen ions are translocated across the cytoplasmic membrane), and thus conserves the redox energy in a proton gradient. The protein is NADH-quinone oxidoreductase subunit N of Campylobacter hominis (strain ATCC BAA-381 / DSM 21671 / CCUG 45161 / LMG 19568 / NCTC 13146 / CH001A).